The following is a 439-amino-acid chain: Phenylacetate-coenzyme A ligase (439 aa).

This sequence belongs to the phenylacetyl-CoA ligase family. As to quaternary structure, monomer.

The catalysed reaction is 2-phenylacetate + ATP + CoA = phenylacetyl-CoA + AMP + diphosphate. It functions in the pathway aromatic compound metabolism; phenylacetate degradation. Its activity is regulated as follows. Inhibited by divalent cations (zinc, copper, mercury) and by the sulfhydryl reagents 5,5-dithiobis(2-nitrobenzoic acid), N-ethylmaleimide and p-chloromercuribenzoate. In terms of biological role, catalyzes the activation of phenylacetic acid (PA) to phenylacetyl-CoA (PA-CoA). Involved in the phenylalanine metabolism. Can also use CTP and UTP as substrate. This is Phenylacetate-coenzyme A ligase (paaK) from Pseudomonas putida (Arthrobacter siderocapsulatus).